We begin with the raw amino-acid sequence, 351 residues long: D-alanine--D-alanine ligase (351 aa).

Positions 141-349 constitute an ATP-grasp domain; it reads KAAFSAAGLP…ISQLVARLIE (209 aa). Position 176–231 (176–231) interacts with ATP; it reads ETQLGYPCFIKPANLGSSVGISKAYDKKELLNGLDLAAQLDSRIVVEKNIKARELE. 3 residues coordinate Mg(2+): D302, E316, and N318.

This sequence belongs to the D-alanine--D-alanine ligase family. Requires Mg(2+) as cofactor. Mn(2+) is required as a cofactor.

The protein localises to the cytoplasm. The catalysed reaction is 2 D-alanine + ATP = D-alanyl-D-alanine + ADP + phosphate + H(+). It participates in cell wall biogenesis; peptidoglycan biosynthesis. Its function is as follows. Cell wall formation. In Prochlorococcus marinus (strain SARG / CCMP1375 / SS120), this protein is D-alanine--D-alanine ligase.